A 273-amino-acid polypeptide reads, in one-letter code: MKTFVTSWADEVDADYVDGLPPSNEYIKGDFKYVTEYKFNDDGKKVKVVRTFKIEKQIVPKAVARRRNWVKFGDSRSDKPGPNSQTTMASEEIFMQFIGSKDFDQTHETQLDPGKNIAKCRICNGEHWSVNCPYKGTSMDSKTVMETKANAAAAAAISDPSKTGKYVPPFMKDGGGISGSKNWGRGRDRDDSSAVRISNLSESMTETDLEELVKKIGPHTKMYLAREKNSGLCKGFAYVHFKFRQDAAAAIEVLNGHGYDHLILCVEWSKPQP.

An RRM domain is found at 193–271 (SAVRISNLSE…LILCVEWSKP (79 aa)).

The protein belongs to the eIF-3 subunit G family. In terms of assembly, component of the eukaryotic translation initiation factor 3 (eIF-3) complex. The eIF-3 complex interacts with pix.

It localises to the cytoplasm. Functionally, RNA-binding component of the eukaryotic translation initiation factor 3 (eIF-3) complex, which is involved in protein synthesis of a specialized repertoire of mRNAs and, together with other initiation factors, stimulates binding of mRNA and methionyl-tRNAi to the 40S ribosome. The eIF-3 complex specifically targets and initiates translation of a subset of mRNAs involved in cell proliferation. This subunit can bind 18S rRNA. The chain is Eukaryotic translation initiation factor 3 subunit G-2 from Drosophila melanogaster (Fruit fly).